A 168-amino-acid chain; its full sequence is G/U mismatch-specific DNA glycosylase (168 aa).

It belongs to the uracil-DNA glycosylase (UDG) superfamily. TDG/mug family. Binds DNA as a monomer.

It localises to the cytoplasm. The enzyme catalyses Specifically hydrolyzes mismatched double-stranded DNA and polynucleotides, releasing free uracil.. In terms of biological role, excises ethenocytosine and uracil, which can arise by alkylation or deamination of cytosine, respectively, from the corresponding mispairs with guanine in ds-DNA. It is capable of hydrolyzing the carbon-nitrogen bond between the sugar-phosphate backbone of the DNA and the mispaired base. The complementary strand guanine functions in substrate recognition. Required for DNA damage lesion repair in stationary-phase cells. In Shigella dysenteriae serotype 1 (strain Sd197), this protein is G/U mismatch-specific DNA glycosylase.